A 523-amino-acid chain; its full sequence is Tyrosine-protein kinase transforming protein Src (523 aa).

The disordered stretch occupies residues 1–50 (MGSSKSKPKDPSQRRRSLEPPDSTHHGGFPASQTPNKTAAPDTHRTPSRS). Gly-2 carries the N-myristoyl glycine; by host lipid modification. Positions 7-25 (KPKDPSQRRRSLEPPDSTH) are enriched in basic and acidic residues. Residues 71 to 139 (TSPQRAGALA…PSNYVAPSDS (69 aa)) enclose the SH3 domain. Residues 145 to 242 (WYFGKITRRE…GLCHRLTNVC (98 aa)) enclose the SH2 domain. The 251-residue stretch at 264–514 (LRLEVKLGQG…TFEYLQAQLL (251 aa)) folds into the Protein kinase domain. Residues 270–278 (LGQGYFGEV) and Lys-292 each bind ATP. The active-site Proton acceptor is the Asp-383. The residue at position 413 (Tyr-413) is a Phosphotyrosine; by autocatalysis.

It belongs to the protein kinase superfamily. Tyr protein kinase family. SRC subfamily. Homodimer. Post-translationally, the phosphorylated form is termed pp60v-src.

It catalyses the reaction L-tyrosyl-[protein] + ATP = O-phospho-L-tyrosyl-[protein] + ADP + H(+). In terms of biological role, this phosphoprotein, required for both the initiation and the maintenance of neoplastic transformation, is a protein kinase that catalyzes the phosphorylation of tyrosine residues in vitro. The sequence is that of Tyrosine-protein kinase transforming protein Src (V-SRC) from Gallus gallus (Chicken).